The primary structure comprises 25 residues: Alpha-amylase inhibitor (25 aa).

Monomer or homodimer. May exist both in a glycosylated and in an unglycosylated form.

The protein resides in the secreted. Functionally, inhibits alpha-amylases but not trypsin. Is more effective against insect alpha-amylases than those of mammals. The sequence is that of Alpha-amylase inhibitor from Secale cereale (Rye).